Consider the following 321-residue polypeptide: Lipoyl synthase (321 aa).

The [4Fe-4S] cluster site is built by C68, C73, C79, C94, C98, C101, and S308. One can recognise a Radical SAM core domain in the interval 80–297 (FNHGTATFMI…KAEAMAMGFT (218 aa)).

It belongs to the radical SAM superfamily. Lipoyl synthase family. [4Fe-4S] cluster is required as a cofactor.

It is found in the cytoplasm. It catalyses the reaction [[Fe-S] cluster scaffold protein carrying a second [4Fe-4S](2+) cluster] + N(6)-octanoyl-L-lysyl-[protein] + 2 oxidized [2Fe-2S]-[ferredoxin] + 2 S-adenosyl-L-methionine + 4 H(+) = [[Fe-S] cluster scaffold protein] + N(6)-[(R)-dihydrolipoyl]-L-lysyl-[protein] + 4 Fe(3+) + 2 hydrogen sulfide + 2 5'-deoxyadenosine + 2 L-methionine + 2 reduced [2Fe-2S]-[ferredoxin]. It participates in protein modification; protein lipoylation via endogenous pathway; protein N(6)-(lipoyl)lysine from octanoyl-[acyl-carrier-protein]: step 2/2. Catalyzes the radical-mediated insertion of two sulfur atoms into the C-6 and C-8 positions of the octanoyl moiety bound to the lipoyl domains of lipoate-dependent enzymes, thereby converting the octanoylated domains into lipoylated derivatives. This is Lipoyl synthase from Klebsiella pneumoniae (strain 342).